We begin with the raw amino-acid sequence, 408 residues long: UPF0761 membrane protein Avin_36810 (408 aa).

6 consecutive transmembrane segments (helical) span residues 33 to 53 (YTAL…LSVV), 92 to 112 (HLTW…LMTV), 132 to 152 (FLLH…GFAL), 174 to 194 (LLKV…YVAV), 209 to 229 (LFAA…VALF), and 238 to 258 (AFAA…IVLL).

The protein belongs to the UPF0761 family.

It is found in the cell inner membrane. The chain is UPF0761 membrane protein Avin_36810 from Azotobacter vinelandii (strain DJ / ATCC BAA-1303).